A 330-amino-acid chain; its full sequence is Membrane progestin receptor gamma (330 aa).

The Cytoplasmic segment spans residues 1–51 (MLSLKLPRLFSIDQIPQVFHEQGILFGYRHPQSSATACILSLFQMTNETLN). A helical membrane pass occupies residues 52-72 (IWTHLLPFWFFAWRFVTALYM). Topologically, residues 73-80 (TDIKNDSY) are extracellular. A helical transmembrane segment spans residues 81–101 (SWPMLVYMCTSCVYPLVSSCA). Topologically, residues 102-113 (HTFSSMSKNARH) are cytoplasmic. Residues 114 to 134 (ICYFLDYGAVNLFSLGSAIAY) form a helical membrane-spanning segment. The Extracellular segment spans residues 135–141 (SAYTFPD). Residues 142–162 (ALMCTTFHDYYVALAVLNTIL) form a helical membrane-spanning segment. Topologically, residues 163–186 (STGLSCYSRFLEIQKPRLCKVIRV) are cytoplasmic. Residues 187-207 (LAFAYPYTWDSLPIFYRLFLF) form a helical membrane-spanning segment. The Extracellular segment spans residues 208–253 (PGESAQNEATSYHQKHMIMTLLASFLYSAHLPERLAPGRFDYIGHS). A helical transmembrane segment spans residues 254–274 (HQLFHVCVILATHMQMEAILL). Over 275–294 (DKTLRKEWLLATSKPFSFSQ) the chain is Cytoplasmic. A helical transmembrane segment spans residues 295-315 (IAGAILLCIIFSLSNIIYFSA). Residues 316–330 (ALYRIPKPELHKKET) lie on the Extracellular side of the membrane.

This sequence belongs to the ADIPOR family. As to expression, expressed in the brain, lung, kidney, colon, adrenal and lung.

The protein localises to the cell membrane. In terms of biological role, plasma membrane progesterone (P4) receptor coupled to G proteins. Seems to act through a G(i) mediated pathway. May be involved in oocyte maturation. This Homo sapiens (Human) protein is Membrane progestin receptor gamma.